A 224-amino-acid chain; its full sequence is MSDYSKLEKCLDYQFKNKNLIIEALTHKSFKKPYNNERLEFLGDAVLNLIVGEYLYLKFPKSNEGELSKIRASLVNETGFTRLANEIKLGEYIFISTAEERNKGRTKASILSDAFEAIMGAIYLESGLNTLKPIILRILEESYDKINLDVLFSDYKTALQEITQARFASIPEYKIEGSYGPDHKKEFEVSIWIDGKNYGKASGKSKKLAQQAAAKIAIDKLKEE.

The 124-residue stretch at 4-127 (YSKLEKCLDY…IMGAIYLESG (124 aa)) folds into the RNase III domain. E40 provides a ligand contact to Mg(2+). Residue D44 is part of the active site. Residues D113 and E116 each coordinate Mg(2+). E116 is a catalytic residue. Positions 154–223 (DYKTALQEIT…AKIAIDKLKE (70 aa)) constitute a DRBM domain.

Belongs to the ribonuclease III family. As to quaternary structure, homodimer. Requires Mg(2+) as cofactor.

Its subcellular location is the cytoplasm. The catalysed reaction is Endonucleolytic cleavage to 5'-phosphomonoester.. Its function is as follows. Digests double-stranded RNA. Involved in the processing of primary rRNA transcript to yield the immediate precursors to the large and small rRNAs (23S and 16S). Processes some mRNAs, and tRNAs when they are encoded in the rRNA operon. Processes pre-crRNA and tracrRNA of type II CRISPR loci if present in the organism. The sequence is that of Ribonuclease 3 from Aliarcobacter butzleri (strain RM4018) (Arcobacter butzleri).